The sequence spans 446 residues: Chromosomal replication initiator protein DnaA (446 aa).

A domain I, interacts with DnaA modulators region spans residues 1–81 (MENISDLWNS…AKLAIRFIIP (81 aa)). A domain II region spans residues 81–109 (PQSQAEEDIDLPPVKRNPAQDDSAHLPQS). Positions 110-326 (MLNPKYTFDT…GALIRVVAYS (217 aa)) are domain III, AAA+ region. Positions 154, 156, 157, and 158 each coordinate ATP. Residues 327–446 (SLINKDINAD…QVEEINGILK (120 aa)) form a domain IV, binds dsDNA region.

The protein belongs to the DnaA family. Oligomerizes as a right-handed, spiral filament on DNA at oriC.

It is found in the cytoplasm. Plays an essential role in the initiation and regulation of chromosomal replication. ATP-DnaA binds to the origin of replication (oriC) to initiate formation of the DNA replication initiation complex once per cell cycle. Binds the DnaA box (a 9 base pair repeat at the origin) and separates the double-stranded (ds)DNA. Forms a right-handed helical filament on oriC DNA; dsDNA binds to the exterior of the filament while single-stranded (ss)DNA is stabiized in the filament's interior. The ATP-DnaA-oriC complex binds and stabilizes one strand of the AT-rich DNA unwinding element (DUE), permitting loading of DNA polymerase. After initiation quickly degrades to an ADP-DnaA complex that is not apt for DNA replication. Binds acidic phospholipids. This Bacillus cereus (strain G9842) protein is Chromosomal replication initiator protein DnaA.